The following is a 79-amino-acid chain: uncharacterized protein (79 aa).

The SpoVT-AbrB domain maps to 10–60 (EAVLTMDSKGQILLPKELRERAGLKAGDRLVAIAGCDENEEVCCLILVKAE).

This is an uncharacterized protein from Archaeoglobus fulgidus (strain ATCC 49558 / DSM 4304 / JCM 9628 / NBRC 100126 / VC-16).